The chain runs to 287 residues: Pol-RFamide neuropeptides (287 aa).

The first 21 residues, 1–21 (MNLITLLVLGVSTCLIYGIEA), serve as a signal peptide directing secretion. Residues 22 to 52 (DEKTSSALENEIVEILNGNFKNEKKSIETSD) constitute a propeptide that is removed on maturation. Residue Q53 is modified to Pyrrolidone carboxylic acid. Phenylalanine amide is present on F59. The propeptide occupies 62–64 (EVN). A Pyrrolidone carboxylic acid modification is found at Q65. F71 is modified (phenylalanine amide). A propeptide spanning residues 74 to 77 (ELSD) is cleaved from the precursor. The residue at position 78 (Q78) is a Pyrrolidone carboxylic acid. A Phenylalanine amide modification is found at F84. A propeptide spanning residues 87–90 (ELSD) is cleaved from the precursor. Pyrrolidone carboxylic acid is present on Q91. A Phenylalanine amide modification is found at F97. The propeptide occupies 100–103 (EVLD). Residue Q104 is modified to Pyrrolidone carboxylic acid. F110 bears the Phenylalanine amide mark. A propeptide spanning residues 113–116 (DASN) is cleaved from the precursor. Residue Q117 is modified to Pyrrolidone carboxylic acid. The residue at position 123 (F123) is a Phenylalanine amide. Residues 126-129 (ELSD) constitute a propeptide that is removed on maturation. At Q130 the chain carries Pyrrolidone carboxylic acid. F136 is modified (phenylalanine amide). The propeptide occupies 139–142 (EGSN). Residue Q143 is modified to Pyrrolidone carboxylic acid. Position 149 is a phenylalanine amide (F149). The propeptide occupies 152-168 (EASKNDLEKQNGRGDSD). Pyrrolidone carboxylic acid is present on Q169. Position 175 is a phenylalanine amide (F175). Residues 178–181 (EARK) constitute a propeptide that is removed on maturation. Pyrrolidone carboxylic acid is present on Q182. The residue at position 188 (F188) is a Phenylalanine amide. Residues 192–194 (DMN) constitute a propeptide that is removed on maturation. Pyrrolidone carboxylic acid is present on Q195. H201 carries the histidine amide modification. Positions 204-207 (ETSD) are excised as a propeptide. Position 208 is a pyrrolidone carboxylic acid (Q208). At F214 the chain carries Phenylalanine amide. A propeptide spanning residues 217–220 (QLSD) is cleaved from the precursor. A Pyrrolidone carboxylic acid modification is found at Q221. F227 is subject to Phenylalanine amide. A disordered region spans residues 229-267 (REVKNDKNNPFRSRYTGDSTQLQRENNQPIEELRDNTEK). Residues 230–287 (EVKNDKNNPFRSRYTGDSTQLQRENNQPIEELRDNTEKVSIENKPIMKKTSVKISKTV) constitute a propeptide that is removed on maturation. Over residues 238–257 (PFRSRYTGDSTQLQRENNQP) the composition is skewed to polar residues.

This sequence belongs to the FARP (FMRFamide related peptide) family. In terms of processing, the N-terminal processing sites of the Pol-RFamide peptides are acidic suggesting that cniderian nervous systems may use a variety of unconventional processing procedures.

The protein resides in the secreted. In terms of biological role, has direct action on motoneurons, and effect includes transient inhibition followed by prolonged excitation. The protein is Pol-RFamide neuropeptides of Polyorchis penicillatus (Hydromedusa).